The primary structure comprises 396 residues: Phosphoglycerate kinase (396 aa).

Substrate-binding positions include 21-23 (DFN), Arg-37, 60-63 (HLGR), Arg-121, and Arg-154. ATP is bound by residues Lys-205, Gly-296, Glu-327, and 353-356 (GGDS).

Belongs to the phosphoglycerate kinase family. As to quaternary structure, monomer.

The protein resides in the cytoplasm. It catalyses the reaction (2R)-3-phosphoglycerate + ATP = (2R)-3-phospho-glyceroyl phosphate + ADP. Its pathway is carbohydrate degradation; glycolysis; pyruvate from D-glyceraldehyde 3-phosphate: step 2/5. This Anaeromyxobacter dehalogenans (strain 2CP-C) protein is Phosphoglycerate kinase.